Consider the following 714-residue polypeptide: NCK-interacting protein with SH3 domain (714 aa).

The 58-residue stretch at 1–58 (MYRALYAFRSAEPNAMAFAAGETFLVLERSSTHWWLAARARSGETGYVPPAYLHRLQG) folds into the SH3 domain. Disordered regions lie at residues 103 to 126 (TLSR…DHHL) and 139 to 298 (RTGF…AAET). The span at 106–121 (RRGTSASSATVMTPST) shows a compositional bias: polar residues. At Ser-120 the chain carries Phosphoserine. The short motif at 168 to 185 (RRAAPTTPPPPVKRRDRE) is the Nuclear localization signal element. The residue at position 174 (Thr-174) is a Phosphothreonine. Over residues 200-215 (SGGSSVSSGSSASSTS) the composition is skewed to low complexity. Positions 216–226 (MDTLYTGSSPS) are enriched in polar residues. The segment covering 252-263 (QPSPSKAPSPEP) has biased composition (pro residues). A phosphoserine mark is found at Ser-260, Ser-286, and Ser-673.

In terms of assembly, associates with the intermediate filaments, vimentin and desmin. Binds the first and third SH3 domains of NCK. Binds the proline-rich domains of N-WASP through its SH3 domain. Similarly, binds diaphanous protein homolog 1 (DRF1). Binds the SH3 domains of GRB2 through its proline-rich domains. Interacts with FASLG.

The protein resides in the nucleus. Its function is as follows. Has an important role in stress fiber formation induced by active diaphanous protein homolog 1 (DRF1). Induces microspike formation, in vivo. In vitro, stimulates N-WASP-induced ARP2/3 complex activation in the absence of CDC42. May play an important role in the maintenance of sarcomere and/or in the assembly of myofibrils into sarcomeres. Implicated in regulation of actin polymerization and cell adhesion. This chain is NCK-interacting protein with SH3 domain (Nckipsd), found in Mus musculus (Mouse).